The primary structure comprises 202 residues: Glycerol-3-phosphate acyltransferase (202 aa).

The next 5 membrane-spanning stretches (helical) occupy residues 11–31 (LLLF…GMVI), 60–80 (AAAA…VLLA), 88–108 (AAQL…WLGF), 117–137 (FLGL…LTWL), and 162–182 (LLLG…VILW).

The protein belongs to the PlsY family. In terms of assembly, probably interacts with PlsX.

The protein localises to the cell inner membrane. The enzyme catalyses an acyl phosphate + sn-glycerol 3-phosphate = a 1-acyl-sn-glycero-3-phosphate + phosphate. The protein operates within lipid metabolism; phospholipid metabolism. Catalyzes the transfer of an acyl group from acyl-phosphate (acyl-PO(4)) to glycerol-3-phosphate (G3P) to form lysophosphatidic acid (LPA). This enzyme utilizes acyl-phosphate as fatty acyl donor, but not acyl-CoA or acyl-ACP. This Ruegeria sp. (strain TM1040) (Silicibacter sp.) protein is Glycerol-3-phosphate acyltransferase.